The following is a 133-amino-acid chain: METNKLYECTVIIDGGLQDEPIAEAMAMVQKVITEKGGSIKSVLDIGRRKTAYPINKKTIGYYAHIEFTADTPVIAEIERVLRYEDVLLRYLIIHLTTPLLEMRKRVEKYSVVIGSPEDKAAAEAEASEEEKK.

It belongs to the bacterial ribosomal protein bS6 family.

In terms of biological role, binds together with bS18 to 16S ribosomal RNA. The sequence is that of Small ribosomal subunit protein bS6 from Chlorobium phaeovibrioides (strain DSM 265 / 1930) (Prosthecochloris vibrioformis (strain DSM 265)).